Consider the following 145-residue polypeptide: MNFKYIVAVSFLIASAYARSVQNDEQSLSQRDVLEEEESLREIRGIGGKILSGLKTALKGAAKELASTYLHRKRIAEDHEVMKRLEAVMRDLDSLDHPEEASERETRGFNQEEIANLFTKKEKRILGPVLGLVGNALGGLIKKIG.

Positions 1 to 18 are cleaved as a signal peptide; the sequence is MNFKYIVAVSFLIASAYA. 2 consecutive propeptides follow at residues 19 to 43 and 74 to 124; these read RSVQNDEQSLSQRDVLEEEESLREI and RIAE…KEKR. I144 is modified (isoleucine amide).

Belongs to the bombinin family. Expressed by the skin glands.

Its subcellular location is the secreted. Functionally, maximin-3 shows antibacterial activity against both Gram-positive and Gram-negative bacteria. It also shows antimicrobial activity against the fungus C.albicans, but not against A.flavus nor P.uticale. It has little hemolytic activity. It possess a significant cytotoxicity against tumor cell lines. It possess a significant anti-HIV activity. It shows high spermicidal activity. In terms of biological role, maximin-H3 shows antibacterial activity against both Gram-positive and Gram-negative bacteria. It also shows antimicrobial activity against the fungus C.albicans. Shows strong hemolytic activity. This Bombina maxima (Giant fire-bellied toad) protein is Maximins 3/H3 type 1.